We begin with the raw amino-acid sequence, 367 residues long: Anhydro-N-acetylmuramic acid kinase (367 aa).

11-18 (GTSLDGVD) is a binding site for ATP.

Belongs to the anhydro-N-acetylmuramic acid kinase family.

It carries out the reaction 1,6-anhydro-N-acetyl-beta-muramate + ATP + H2O = N-acetyl-D-muramate 6-phosphate + ADP + H(+). It participates in amino-sugar metabolism; 1,6-anhydro-N-acetylmuramate degradation. Its pathway is cell wall biogenesis; peptidoglycan recycling. In terms of biological role, catalyzes the specific phosphorylation of 1,6-anhydro-N-acetylmuramic acid (anhMurNAc) with the simultaneous cleavage of the 1,6-anhydro ring, generating MurNAc-6-P. Is required for the utilization of anhMurNAc either imported from the medium or derived from its own cell wall murein, and thus plays a role in cell wall recycling. This Rhodopseudomonas palustris (strain ATCC BAA-98 / CGA009) protein is Anhydro-N-acetylmuramic acid kinase.